Consider the following 355-residue polypeptide: Guanine nucleotide-binding protein G(i) subunit alpha-2 (355 aa).

The N-myristoyl glycine moiety is linked to residue G2. Residue C3 is the site of S-palmitoyl cysteine attachment. The 324-residue stretch at 32-355 (REVKLLLLGA…KNNLKDCGLF (324 aa)) folds into the G-alpha domain. Positions 35–48 (KLLLLGAGESGKST) are G1 motif. Residues 40 to 47 (GAGESGKS), 176 to 182 (LRTRVKT), 201 to 205 (DVGGQ), 270 to 273 (NKKD), and A327 each bind GTP. Residues S47 and T182 each contribute to the Mg(2+) site. Residues 174–182 (DVLRTRVKT) are G2 motif. The G3 motif stretch occupies residues 197–206 (FKMFDVGGQR). The interval 266-273 (ILFLNKKD) is G4 motif. The G5 motif stretch occupies residues 325-330 (TCATDT).

This sequence belongs to the G-alpha family. G(i/o/t/z) subfamily. As to quaternary structure, g proteins are composed of 3 units; alpha, beta and gamma. The alpha chain contains the guanine nucleotide binding site.

The protein localises to the cytoplasm. It localises to the cytoskeleton. The protein resides in the microtubule organizing center. Its subcellular location is the centrosome. It is found in the cell membrane. In terms of biological role, guanine nucleotide-binding proteins (G proteins) are involved as modulators or transducers in various transmembrane signaling systems. The G(i) proteins are involved in hormonal regulation of adenylate cyclase: they inhibit the cyclase in response to beta-adrenergic stimuli. May play a role in cell division. The polypeptide is Guanine nucleotide-binding protein G(i) subunit alpha-2 (GNAI2) (Gallus gallus (Chicken)).